The following is a 612-amino-acid chain: Glutamine--fructose-6-phosphate aminotransferase [isomerizing] (612 aa).

C2 acts as the Nucleophile; for GATase activity in catalysis. The Glutamine amidotransferase type-2 domain occupies C2–D219. 2 consecutive SIS domains span residues A287–S427 and I460–P602. K607 (for Fru-6P isomerization activity) is an active-site residue.

Homodimer.

It is found in the cytoplasm. It carries out the reaction D-fructose 6-phosphate + L-glutamine = D-glucosamine 6-phosphate + L-glutamate. Catalyzes the first step in hexosamine metabolism, converting fructose-6P into glucosamine-6P using glutamine as a nitrogen source. In Francisella tularensis subsp. tularensis (strain SCHU S4 / Schu 4), this protein is Glutamine--fructose-6-phosphate aminotransferase [isomerizing].